Here is a 265-residue protein sequence, read N- to C-terminus: Hydroxyethylthiazole kinase (265 aa).

Met50 contributes to the substrate binding site. ATP-binding residues include Arg125 and Thr171. Residue Gly198 participates in substrate binding.

It belongs to the Thz kinase family. It depends on Mg(2+) as a cofactor.

The enzyme catalyses 5-(2-hydroxyethyl)-4-methylthiazole + ATP = 4-methyl-5-(2-phosphooxyethyl)-thiazole + ADP + H(+). It functions in the pathway cofactor biosynthesis; thiamine diphosphate biosynthesis; 4-methyl-5-(2-phosphoethyl)-thiazole from 5-(2-hydroxyethyl)-4-methylthiazole: step 1/1. Catalyzes the phosphorylation of the hydroxyl group of 4-methyl-5-beta-hydroxyethylthiazole (THZ). This chain is Hydroxyethylthiazole kinase, found in Salmonella agona (strain SL483).